The chain runs to 23 residues: Alyteserin-1d (23 aa).

Asparagine 23 bears the Asparagine amide mark.

As to expression, expressed by the skin glands.

The protein localises to the secreted. Its subcellular location is the target cell membrane. Its function is as follows. Antibacterial peptide with amphipathic alpha-helical structure. Shows selective growth inhibitory activity against the Gram-negative bacteria E.coli (MIC=25 uM) Has a weak hemolytic activity against human erythrocytes (LC(50)&gt;100 uM). Is very weakly active against S.aureus (MIC=200 uM). The protein is Alyteserin-1d of Alytes obstetricans (Common midwife toad).